We begin with the raw amino-acid sequence, 1012 residues long: DNA polymerase catalytic subunit (1012 aa).

This sequence belongs to the DNA polymerase type-B family.

The protein resides in the host nucleus. It catalyses the reaction DNA(n) + a 2'-deoxyribonucleoside 5'-triphosphate = DNA(n+1) + diphosphate. The protein is DNA polymerase catalytic subunit (U38) of Human herpesvirus 6A (strain Uganda-1102) (HHV-6 variant A).